The chain runs to 175 residues: Interferon a3 (175 aa).

Positions 1-23 (MYTMQSWSCIFLIICSMQSVCHC) are cleaved as a signal peptide. Cys-24 and Cys-120 are oxidised to a cystine.

It belongs to the alpha/beta interferon family. Isoform 1 and isoform 2 are expressed in several tissues, including gill, spleen, intestine, kidney and skin.

It is found in the secreted. The protein resides in the cytoplasm. It localises to the cytosol. In terms of biological role, key player in antiviral response. Induces expression of TLRs, including that of TLR3, TLR9 and TLR8a1, and that of cytosolic pattern recognition receptors, including RIGI, IFIH1/MDA5 and DHX58/LGP2. Also induces MX1 and its own expression. In the presence of intracellular IFNAR2 (iIFNAR2) and IFNAR1B, intracellular isoform 3 may mediate STAT1 and STAT2 phosphorylation and induction of EIF2AK2, MX1 and RSAD2. The sequence is that of Interferon a3 from Oncorhynchus mykiss (Rainbow trout).